Consider the following 453-residue polypeptide: Probable acetylornithine aminotransferase, mitochondrial (453 aa).

K302 bears the N6-(pyridoxal phosphate)lysine mark.

It belongs to the class-III pyridoxal-phosphate-dependent aminotransferase family. It depends on pyridoxal 5'-phosphate as a cofactor.

The protein resides in the mitochondrion matrix. The enzyme catalyses N(2)-acetyl-L-ornithine + 2-oxoglutarate = N-acetyl-L-glutamate 5-semialdehyde + L-glutamate. It participates in amino-acid biosynthesis; L-arginine biosynthesis; N(2)-acetyl-L-ornithine from L-glutamate: step 4/4. The chain is Probable acetylornithine aminotransferase, mitochondrial (argD) from Dictyostelium discoideum (Social amoeba).